Reading from the N-terminus, the 305-residue chain is 4-diphosphocytidyl-2-C-methyl-D-erythritol kinase (305 aa).

Residue Lys-15 is part of the active site. 99–109 lines the ATP pocket; sequence PMGGGIGGGSS. Asp-141 is a catalytic residue.

It belongs to the GHMP kinase family. IspE subfamily.

The catalysed reaction is 4-CDP-2-C-methyl-D-erythritol + ATP = 4-CDP-2-C-methyl-D-erythritol 2-phosphate + ADP + H(+). The protein operates within isoprenoid biosynthesis; isopentenyl diphosphate biosynthesis via DXP pathway; isopentenyl diphosphate from 1-deoxy-D-xylulose 5-phosphate: step 3/6. Catalyzes the phosphorylation of the position 2 hydroxy group of 4-diphosphocytidyl-2C-methyl-D-erythritol. The chain is 4-diphosphocytidyl-2-C-methyl-D-erythritol kinase from Marinomonas sp. (strain MWYL1).